The sequence spans 306 residues: 4-hydroxy-3-methylbut-2-enyl diphosphate reductase 1 (306 aa).

C10 is a binding site for [4Fe-4S] cluster. Positions 39 and 72 each coordinate (2E)-4-hydroxy-3-methylbut-2-enyl diphosphate. 2 residues coordinate dimethylallyl diphosphate: H39 and H72. Residues H39 and H72 each coordinate isopentenyl diphosphate. C94 provides a ligand contact to [4Fe-4S] cluster. Residue H122 participates in (2E)-4-hydroxy-3-methylbut-2-enyl diphosphate binding. Residue H122 coordinates dimethylallyl diphosphate. Isopentenyl diphosphate is bound at residue H122. E124 serves as the catalytic Proton donor. (2E)-4-hydroxy-3-methylbut-2-enyl diphosphate is bound at residue T162. Residue C192 coordinates [4Fe-4S] cluster. Residues S220, S221, N222, and S264 each coordinate (2E)-4-hydroxy-3-methylbut-2-enyl diphosphate. S220, S221, N222, and S264 together coordinate dimethylallyl diphosphate. Isopentenyl diphosphate-binding residues include S220, S221, N222, and S264.

Belongs to the IspH family. It depends on [4Fe-4S] cluster as a cofactor.

The catalysed reaction is isopentenyl diphosphate + 2 oxidized [2Fe-2S]-[ferredoxin] + H2O = (2E)-4-hydroxy-3-methylbut-2-enyl diphosphate + 2 reduced [2Fe-2S]-[ferredoxin] + 2 H(+). The enzyme catalyses dimethylallyl diphosphate + 2 oxidized [2Fe-2S]-[ferredoxin] + H2O = (2E)-4-hydroxy-3-methylbut-2-enyl diphosphate + 2 reduced [2Fe-2S]-[ferredoxin] + 2 H(+). It functions in the pathway isoprenoid biosynthesis; dimethylallyl diphosphate biosynthesis; dimethylallyl diphosphate from (2E)-4-hydroxy-3-methylbutenyl diphosphate: step 1/1. The protein operates within isoprenoid biosynthesis; isopentenyl diphosphate biosynthesis via DXP pathway; isopentenyl diphosphate from 1-deoxy-D-xylulose 5-phosphate: step 6/6. Functionally, catalyzes the conversion of 1-hydroxy-2-methyl-2-(E)-butenyl 4-diphosphate (HMBPP) into a mixture of isopentenyl diphosphate (IPP) and dimethylallyl diphosphate (DMAPP). Acts in the terminal step of the DOXP/MEP pathway for isoprenoid precursor biosynthesis. In Rhodopseudomonas palustris (strain ATCC BAA-98 / CGA009), this protein is 4-hydroxy-3-methylbut-2-enyl diphosphate reductase 1.